We begin with the raw amino-acid sequence, 181 residues long: RING-H2 finger protein ATL56 (181 aa).

A disordered region spans residues 1-24 (MPPTNNYRISGEPPSTTPSHPPPK). Pro residues predominate over residues 15–24 (STTPSHPPPK). The helical transmembrane segment at 32-52 (LFLVGVIMFSIFFLFLVLIGI) threads the bilayer. The segment at 110–152 (CVVCFDGFRQGQWCRNLPGCGHVFHRKCVDTWLLKASTCPICR) adopts an RING-type; atypical zinc-finger fold.

Belongs to the RING-type zinc finger family. ATL subfamily.

The protein resides in the membrane. It catalyses the reaction S-ubiquitinyl-[E2 ubiquitin-conjugating enzyme]-L-cysteine + [acceptor protein]-L-lysine = [E2 ubiquitin-conjugating enzyme]-L-cysteine + N(6)-ubiquitinyl-[acceptor protein]-L-lysine.. It participates in protein modification; protein ubiquitination. This chain is RING-H2 finger protein ATL56 (ATL56), found in Arabidopsis thaliana (Mouse-ear cress).